We begin with the raw amino-acid sequence, 132 residues long: Ribosome-binding factor A (132 aa).

The protein belongs to the RbfA family. As to quaternary structure, monomer. Binds 30S ribosomal subunits, but not 50S ribosomal subunits or 70S ribosomes.

It localises to the cytoplasm. One of several proteins that assist in the late maturation steps of the functional core of the 30S ribosomal subunit. Associates with free 30S ribosomal subunits (but not with 30S subunits that are part of 70S ribosomes or polysomes). Required for efficient processing of 16S rRNA. May interact with the 5'-terminal helix region of 16S rRNA. The sequence is that of Ribosome-binding factor A from Burkholderia multivorans (strain ATCC 17616 / 249).